The following is a 446-amino-acid chain: Exodeoxyribonuclease 7 large subunit (446 aa).

It belongs to the XseA family. Heterooligomer composed of large and small subunits.

Its subcellular location is the cytoplasm. The catalysed reaction is Exonucleolytic cleavage in either 5'- to 3'- or 3'- to 5'-direction to yield nucleoside 5'-phosphates.. In terms of biological role, bidirectionally degrades single-stranded DNA into large acid-insoluble oligonucleotides, which are then degraded further into small acid-soluble oligonucleotides. The sequence is that of Exodeoxyribonuclease 7 large subunit from Streptococcus pyogenes serotype M49 (strain NZ131).